Reading from the N-terminus, the 802-residue chain is Copper-exporting P-type ATPase (802 aa).

HMA domains are found at residues 5–70 (KKTT…YGVA) and 72–138 (ETVE…YDAS). Residues Cys16, Cys19, Cys83, and Cys86 each contribute to the Cu(+) site. A run of 6 helical transmembrane segments spans residues 161–181 (LIISAVLSLPLLMLMFVHLFN), 192–212 (WFQFILATPVQFIIGWQFYVG), 224–244 (MDVLVAVGTSAAYFYSIYEMV), 256–276 (LYFETSAVLITLILFGKYLEA), 411–431 (YFVPIVVGIALLTFIVWITLV), and 438–458 (PALVASISVLVIACPCALGLA). Catalysis depends on Asp495, which acts as the 4-aspartylphosphate intermediate. 2 residues coordinate Mg(2+): Asp690 and Asp694. The next 2 helical transmembrane spans lie at 748-767 (LFWAFGYNIAGIPIAALGLL) and 771-790 (VAGAAMALSSVSVVTNALRL).

This sequence belongs to the cation transport ATPase (P-type) (TC 3.A.3) family. Type IB subfamily.

It localises to the cell membrane. It carries out the reaction Cu(+)(in) + ATP + H2O = Cu(+)(out) + ADP + phosphate + H(+). Functionally, involved in copper export. The protein is Copper-exporting P-type ATPase (copA) of Staphylococcus aureus (strain MRSA252).